Reading from the N-terminus, the 626-residue chain is MLLKVSSCEPLVPIKQWIHTSQLDLSDSSSLVADLLYNIIKFNFSGLEDKRAIFTGYESIKRYTIGNEMFLQLAKDGFALPVSMSYGLFLEETDTLELRALPRSEGLHRGCEVLVLRLDSPNELKENIREWSSKFMNSKASQKQQMLSPETMQKVDLAGRASPRYQANDSWISKKRNAPLSSISQYANMPENYALNTKKSKISNENDTIFKANFQQNKYESLHAKQISASDLSLHQEFVSASIVQQPELNSLLTSQSKNSTPSESDSSSSESSSSVSDSSDLSSTSDSSSGDESSDTARQSSSDTISSNNVSVSVSLNTANEFSFPQGTFKAENEAVESEVAPSSSTPPTVEEISYLHYDEPSQYYFSSPSKLSSETTKVHRGCENTEKPSEEGKNFTTPLSDSVESENTWSNTLRSSVEDDNTGVSDDNKKSKLNAEFDGHVNNISVRPPGSGSSATKARNLRRKKARILKRLMQESNDTFSANESTVVANVPDSYLTKNDEEDSASLASLKVAPKYVSHPVSLSSNSFHTEFPIGSLMRFTVMDLNPVTCTPEISEKTGRVVDCSEEKVKIQLDLGDRLDLKFDVNGEVIRNRYGTTPDEELIEGIATYEWSSLSNVHKLELTN.

Phosphoserine is present on residues S148 and S162. Disordered regions lie at residues 253–309 and 382–433; these read LTSQ…ISSN and RGCE…NKKS. Residues 260–292 are compositionally biased toward low complexity; the sequence is STPSESDSSSSESSSSVSDSSDLSSTSDSSSGD. Over residues 382–395 the composition is skewed to basic and acidic residues; the sequence is RGCENTEKPSEEGK. Residues 396-417 show a composition bias toward polar residues; sequence NFTTPLSDSVESENTWSNTLRS.

Belongs to the coilin family. As to quaternary structure, interacts with tgs1; both proteins are required to maintain Cajal body integrity. Interacts with U2 and U5 snRNAs.

It localises to the cytoplasm. The protein localises to the nucleus. Its subcellular location is the cajal body. Functionally, component of nuclear coiled bodies, also known as Cajal bodies or CBs, which are involved in the modification and assembly of nucleoplasmic snRNPs. Required for proper pre-mRNA splicing. This chain is Coilin, found in Schizosaccharomyces pombe (strain 972 / ATCC 24843) (Fission yeast).